A 757-amino-acid polypeptide reads, in one-letter code: MDVNPTLLFLKVPAQNAISTTFPYTGDPPYSHGTGTGYTMDTVNRTHQYSERGRWTTNTETGALQLNPIDGPLPEDHEPSGYAQTDCVLEAMAFLEESHPGIFENSCIETMEVVQQTRVDKLTQGRQTYDWTLNRNQPAATALANTIEVFRSNGLTANESGRLIDFLKDVMESMNKEEMGITTHFQRKRRVRDNMTKKMVTQRTIGKRKQRLNKRSYLIRALTLNTMTKDAERGKLKRRAIATPGMQIRGFVYFVETLARSICEKLEQSGLPVGGNEKKAKLANVVRKMMTNSQDTELSFTITGDNTKWNENQNPRMFLAMITYMTRNQPEWFRNVLSIAPIMFSNKMARLGKGYMFESKSMKLRTQIPAEMLASIDLKYFNDSTRKKIEKIRPLLIEGTASLSPGMMMGMFNMLSTVLGVSILNLGQKRYTKTTYWWDGLQSSDDFALIVNAPNHEGIQAGVDRFYRTCKLLGINMSKKKSYINRTGTFEFTSFFYRYGFVANFSMELPSFGVSGINESADMSIGVTVIKNNMINNDLGPATAQMALQLFIKDYRYTYRCHRGDTQIQTRRSFEIKKLWEQTRSKAGLLVSDGGPNLYNIRNLHIPEVCLKWELMDEDYQGRLCNPLNPFVSHKEIESMNNAVMMPAHGPAKNMEYDAVATTHSWIPKRNRSILNTSQRGILEDEQMYQRCCNLFEKFFPSSSYRRPVGISSMVEAMVSRARIDARIDFESGRIKKEEFTEIMKICSTIEELRRQK.

2 consecutive short sequence motifs (nuclear localization signal) follow at residues 187-195 (RKRRVRDNM) and 203-216 (RTIGKRKQRLNKRS). A promoter-binding site region spans residues 249 to 256 (RGFVYFVE). One can recognise a RdRp catalytic domain in the interval 286-483 (VRKMMTNSQD…GINMSKKKSY (198 aa)).

This sequence belongs to the influenza viruses polymerase PB1 family. In terms of assembly, influenza RNA polymerase is composed of three subunits: PB1, PB2 and PA. Interacts (via N-terminus) with PA (via C-terminus). Interacts (via C-terminus) with PB2 (via N-terminus); this interaction is essential for transcription initiation. Interacts (via C-terminus) with human PKP2 (via N-terminus); the interaction competitively inhibits the interaction between the RNA polymerase subunits PB1 and PB2. Post-translationally, phosphorylated by host PRKCA.

The protein localises to the host nucleus. The protein resides in the host cytoplasm. The enzyme catalyses RNA(n) + a ribonucleoside 5'-triphosphate = RNA(n+1) + diphosphate. In terms of biological role, RNA-dependent RNA polymerase which is responsible for replication and transcription of virus RNA segments. The transcription of viral mRNAs occurs by a unique mechanism called cap-snatching. 5' methylated caps of cellular mRNAs are cleaved after 10-13 nucleotides by PA. In turn, these short capped RNAs are used as primers by PB1 for transcription of viral mRNAs. During virus replication, PB1 initiates RNA synthesis and copy vRNA into complementary RNA (cRNA) which in turn serves as a template for the production of more vRNAs. In Influenza A virus (strain A/Henry/1936 H1N1), this protein is RNA-directed RNA polymerase catalytic subunit.